Here is a 253-residue protein sequence, read N- to C-terminus: MSILFYVMFLAYLRGVQGNSMDQRSLPEDSLNSLIIKLIQADILKNKLSKQMVDVKENYQSTLPKAEAPPREPAKSEFQPVTAMGPELLRQQRRYSSPRVLLSDSTPLEPPPLYLMEDYVGSPVAANRTSRRKRYAEHKSHRGEYSVCDSESLWVTDKSSAIDIRGHQVTVLGEIKTGNSPVKQYFYETRCKEARPVKNGCRGIDDKHWNSQCKTSQTYVRALTSENNKLVGWRWIRIDTSCVCALSRKIGRT.

Positions 1–18 are cleaved as a signal peptide; it reads MSILFYVMFLAYLRGVQG. Positions 19–134 are excised as a propeptide; that stretch reads NSMDQRSLPE…AANRTSRRKR (116 aa). The disordered stretch occupies residues 62–89; that stretch reads TLPKAEAPPREPAKSEFQPVTAMGPELL. Asparagine 127 is a glycosylation site (N-linked (GlcNAc...) asparagine). 3 cysteine pairs are disulfide-bonded: cysteine 148-cysteine 213, cysteine 191-cysteine 242, and cysteine 201-cysteine 244.

This sequence belongs to the NGF-beta family.

Its subcellular location is the secreted. Functionally, seems to promote the survival of visceral and proprioceptive sensory neurons. The chain is Neurotrophin-3 (NTF3) from Bos taurus (Bovine).